Consider the following 245-residue polypeptide: Chymotrypsinogen A (245 aa).

Intrachain disulfides connect Cys1–Cys122, Cys42–Cys58, Cys136–Cys201, Cys168–Cys182, and Cys191–Cys220. The propeptide occupies Ser14–Arg15. The region spanning Ile16 to Ala243 is the Peptidase S1 domain. Residues His57 and Asp102 each act as charge relay system in the active site. Residues Thr147–Asn148 constitute a propeptide that is removed on maturation. Ser195 acts as the Charge relay system in catalysis.

It belongs to the peptidase S1 family.

The protein resides in the secreted. It localises to the extracellular space. The enzyme catalyses Preferential cleavage: Tyr-|-Xaa, Trp-|-Xaa, Phe-|-Xaa, Leu-|-Xaa.. The chain is Chymotrypsinogen A from Bos taurus (Bovine).